The following is a 270-amino-acid chain: uncharacterized protein (270 aa).

The N-terminal stretch at 1-22 is a signal peptide; it reads MGYIKRMALYMSVFLLIIFIVG. A lipid anchor (N-palmitoyl cysteine) is attached at C23. Residue C23 is the site of S-diacylglycerol cysteine attachment.

It belongs to the staphylococcal tandem lipoprotein family.

Its subcellular location is the cell membrane. This is an uncharacterized protein from Staphylococcus aureus (strain COL).